The primary structure comprises 1072 residues: LRR receptor-like serine/threonine-protein kinase RGI5 (1072 aa).

An N-terminal signal peptide occupies residues 1-21; the sequence is MERERSNFFFLFLFCSWVSMA. Topologically, residues 22-706 are extracellular; it reads QPTLSLSSDG…NGVKSPKIVA (685 aa). Cys56 and Cys63 are disulfide-bonded. LRR repeat units lie at residues 66–89, 90–113, 114–138, 140–162, 164–185, 187–211, 212–234, 235–259, 260–283, 285–307, 308–331, 332–355, 356–379, 381–402, 403–427, 429–451, 452–475, 477–499, 500–523, 524–546, 548–571, 572–595, 597–619, 620–642, and 643–667; these read DNRVISVSIPDTFLNLSSIPDLSS, LSSLQFLNLSSTNLSGPIPPSFGK, LTHLRLLDLSSNSLSGPIPSELGRL, TLQFLILNANKLSGSIPSQISNL, ALQVLCLQDNLLNGSIPSSFGS, VSLQQFRLGGNTNLGGPIPAQLGFL, KNLTTLGFAASGLSGSIPSTFGN, LVNLQTLALYDTEISGTIPPQLGLC, SELRNLYLHMNKLTGSIPKELGKL, KITSLLLWGNSLSGVIPPEISNC, SSLVVFDVSANDLTGDIPGDLGKL, VWLEQLQLSDNMFTGQIPWELSNC, SSLIALQLDKNKLSGSIPSQIGNL, SLQSFFLWENSISGTIPSSFGN, CTDLVALDLSRNKLTGRIPEELFSL, RLSKLLLLGNSLSGGLPKSVAKC, QSLVRLRVGENQLSGQIPKEIGEL, NLVFLDLYMNHFSGGLPYEISNI, TVLELLDVHNNYITGDIPAQLGNL, VNLEQLDLSRNSFTGNIPLSFGN, SYLNKLILNNNLLTGQIPKSIKNL, QKLTLLDLSYNSLSGEIPQELGQV, SLTINLDLSYNTFTGNIPETFSD, LTQLQSLDLSSNSLHGDIKVLGS, and LTSLASLNISCNNFSGPIPSTPFFK. Residues Asn80, Asn97, and Asn102 are each glycosylated (N-linked (GlcNAc...) asparagine). The Small peptide recognition motif lies at 171–172; the sequence is QD. Residue Asn176 is glycosylated (N-linked (GlcNAc...) asparagine). The Small peptide recognition signature appears at 193–196; that stretch reads RLGG. An N-linked (GlcNAc...) asparagine glycan is attached at Asn213. 3 consecutive short sequence motifs (small peptide recognition) follow at residues 216-221, Tyr244, and 266-268; these read TLGFAA and YLH. N-linked (GlcNAc...) asparagine glycosylation is present at Asn306. 2 consecutive short sequence motifs (small peptide recognition) follow at residues 314–317 and 336–338; these read DVSA and QLQ. An N-linked (GlcNAc...) asparagine glycan is attached at Asn354. Positions 384–388 match the Small peptide recognition motif; it reads SFFLW. N-linked (GlcNAc...) asparagine glycosylation occurs at Asn402. Short sequence motifs (small peptide recognition) lie at residues 410-413, 432-436, and 456-458; these read DLSR, KLLLL, and RLR. Asn498 is a glycosylation site (N-linked (GlcNAc...) asparagine). An N-linked (GlcNAc...) asparagine glycan is attached at Asn546. N-linked (GlcNAc...) asparagine glycosylation is found at Asn650 and Asn655. Residues 707-727 traverse the membrane as a helical segment; that stretch reads LTAVILASITIAILAAWLLIL. Topologically, residues 728 to 1072 are cytoplasmic; that stretch reads RNNHLYKTSQ…SQPLIKPSSS (345 aa). Residue Thr764 is modified to Phosphothreonine. The Protein kinase domain occupies 772–1067; it reads LTDENVIGKG…EWGKTSQPLI (296 aa). ATP contacts are provided by residues 778 to 786 and Lys800; that span reads IGKGCSGIV. 2 positions are modified to phosphotyrosine: Tyr851 and Tyr887. Residue Asp900 is the Proton acceptor of the active site. Ser936 carries the post-translational modification Phosphoserine. Tyr944 and Tyr951 each carry phosphotyrosine. Position 952 is a phosphothreonine (Thr952).

It belongs to the protein kinase superfamily. Ser/Thr protein kinase family. Binds to RGF1; this interaction triggers the formation of heterodimers with SERK1. In terms of processing, phosphorylated and ubiquitinated upon interaction with RGF1, thus leading to activation a subsequent degradation. Post-translationally, autophosphorylated. Expressed in roots and hypocotyls.

Its subcellular location is the membrane. The catalysed reaction is L-seryl-[protein] + ATP = O-phospho-L-seryl-[protein] + ADP + H(+). The enzyme catalyses L-threonyl-[protein] + ATP = O-phospho-L-threonyl-[protein] + ADP + H(+). Functionally, together with RGI1, RGI2, RGI3 and RGI4, acts as a receptor of RGF1, a peptide hormone that maintains the postembryonic root stem cell niche by regulating the expression levels and patterns of the transcription factor PLETHORA (PLT). Links RGF1 signal with its downstream components. The sequence is that of LRR receptor-like serine/threonine-protein kinase RGI5 from Arabidopsis thaliana (Mouse-ear cress).